A 214-amino-acid polypeptide reads, in one-letter code: Probable nicotinate-nucleotide adenylyltransferase (214 aa).

Belongs to the NadD family.

The catalysed reaction is nicotinate beta-D-ribonucleotide + ATP + H(+) = deamido-NAD(+) + diphosphate. It functions in the pathway cofactor biosynthesis; NAD(+) biosynthesis; deamido-NAD(+) from nicotinate D-ribonucleotide: step 1/1. Functionally, catalyzes the reversible adenylation of nicotinate mononucleotide (NaMN) to nicotinic acid adenine dinucleotide (NaAD). The chain is Probable nicotinate-nucleotide adenylyltransferase from Pseudomonas paraeruginosa (strain DSM 24068 / PA7) (Pseudomonas aeruginosa (strain PA7)).